Reading from the N-terminus, the 201-residue chain is Urease accessory protein UreG (201 aa).

A GTP-binding site is contributed by Gly-12–Thr-19.

It belongs to the SIMIBI class G3E GTPase family. UreG subfamily. In terms of assembly, homodimer. UreD, UreF and UreG form a complex that acts as a GTP-hydrolysis-dependent molecular chaperone, activating the urease apoprotein by helping to assemble the nickel containing metallocenter of UreC. The UreE protein probably delivers the nickel.

The protein resides in the cytoplasm. Facilitates the functional incorporation of the urease nickel metallocenter. This process requires GTP hydrolysis, probably effectuated by UreG. This chain is Urease accessory protein UreG, found in Dechloromonas aromatica (strain RCB).